The following is a 393-amino-acid chain: tRNA(Met) cytidine acetate ligase (393 aa).

Positions 81, 142, and 167 each coordinate ATP.

This sequence belongs to the TmcAL family.

The protein resides in the cytoplasm. The enzyme catalyses cytidine(34) in elongator tRNA(Met) + acetate + ATP = N(4)-acetylcytidine(34) in elongator tRNA(Met) + AMP + diphosphate. In terms of biological role, catalyzes the formation of N(4)-acetylcytidine (ac(4)C) at the wobble position of elongator tRNA(Met), using acetate and ATP as substrates. First activates an acetate ion to form acetyladenylate (Ac-AMP) and then transfers the acetyl group to tRNA to form ac(4)C34. The protein is tRNA(Met) cytidine acetate ligase of Bacillus cereus (strain ZK / E33L).